The chain runs to 218 residues: Thiopurine S-methyltransferase (218 aa).

4 residues coordinate S-adenosyl-L-methionine: tryptophan 10, leucine 45, glutamate 66, and arginine 123.

The protein belongs to the class I-like SAM-binding methyltransferase superfamily. TPMT family.

Its subcellular location is the cytoplasm. It catalyses the reaction S-adenosyl-L-methionine + a thiopurine = S-adenosyl-L-homocysteine + a thiopurine S-methylether.. This chain is Thiopurine S-methyltransferase, found in Shewanella sp. (strain MR-4).